A 470-amino-acid polypeptide reads, in one-letter code: Dihydrolipoyl dehydrogenase (470 aa).

FAD contacts are provided by residues 39–47 (EKGNLGGVC), K56, and A119. Cysteines 47 and 52 form a disulfide. Residues 183 to 187 (GGGYI), E206, and 271 to 274 (TVGR) each bind NAD(+). Positions 314 and 322 each coordinate FAD. H446 functions as the Proton acceptor in the catalytic mechanism.

This sequence belongs to the class-I pyridine nucleotide-disulfide oxidoreductase family. Homodimer. Identified in a complex with PdhC. FAD serves as cofactor.

It is found in the cytoplasm. The catalysed reaction is N(6)-[(R)-dihydrolipoyl]-L-lysyl-[protein] + NAD(+) = N(6)-[(R)-lipoyl]-L-lysyl-[protein] + NADH + H(+). In terms of biological role, lipoamide dehydrogenase is a component of the alpha-ketoacid dehydrogenase complexes. The chain is Dihydrolipoyl dehydrogenase (pdhD) from Geobacillus stearothermophilus (Bacillus stearothermophilus).